The following is a 439-amino-acid chain: Glutamate--tRNA ligase 2 (439 aa).

Residues 6–16 (PSPTGDMHIGN) carry the 'HIGH' region motif. Positions 232–236 (KMSKR) match the 'KMSKS' region motif. Residue Lys-235 participates in ATP binding.

Belongs to the class-I aminoacyl-tRNA synthetase family. Glutamate--tRNA ligase type 1 subfamily. As to quaternary structure, monomer.

The protein localises to the cytoplasm. It catalyses the reaction tRNA(Glu) + L-glutamate + ATP = L-glutamyl-tRNA(Glu) + AMP + diphosphate. In terms of biological role, catalyzes the attachment of glutamate to tRNA(Glu) in a two-step reaction: glutamate is first activated by ATP to form Glu-AMP and then transferred to the acceptor end of tRNA(Glu). The chain is Glutamate--tRNA ligase 2 from Helicobacter pylori (strain P12).